A 343-amino-acid chain; its full sequence is Glycerol-3-phosphate dehydrogenase [NAD(P)+] (343 aa).

Positions 29, 49, and 122 each coordinate NADPH. The sn-glycerol 3-phosphate site is built by Lys122, Gly150, and Ser152. Ala154 lines the NADPH pocket. Sn-glycerol 3-phosphate is bound by residues Lys205, Asp258, Ser268, Arg269, and Asn270. The active-site Proton acceptor is Lys205. Arg269 serves as a coordination point for NADPH. Positions 288 and 290 each coordinate NADPH.

Belongs to the NAD-dependent glycerol-3-phosphate dehydrogenase family.

The protein resides in the cytoplasm. The catalysed reaction is sn-glycerol 3-phosphate + NAD(+) = dihydroxyacetone phosphate + NADH + H(+). It catalyses the reaction sn-glycerol 3-phosphate + NADP(+) = dihydroxyacetone phosphate + NADPH + H(+). The protein operates within membrane lipid metabolism; glycerophospholipid metabolism. Functionally, catalyzes the reduction of the glycolytic intermediate dihydroxyacetone phosphate (DHAP) to sn-glycerol 3-phosphate (G3P), the key precursor for phospholipid synthesis. This is Glycerol-3-phosphate dehydrogenase [NAD(P)+] from Mesorhizobium japonicum (strain LMG 29417 / CECT 9101 / MAFF 303099) (Mesorhizobium loti (strain MAFF 303099)).